The sequence spans 147 residues: Globin, polymeric component P2 (147 aa).

The 145-residue stretch at 2-146 (PLTADQVAAL…ISDALVAGLE (145 aa)) folds into the Globin domain. H96 contributes to the heme b binding site.

This sequence belongs to the globin family. Polymer.

This Glycera dibranchiata (Bloodworm) protein is Globin, polymeric component P2.